A 454-amino-acid polypeptide reads, in one-letter code: tRNA modification GTPase MnmE (454 aa).

The (6S)-5-formyl-5,6,7,8-tetrahydrofolate site is built by Arg-23, Glu-80, and Lys-120. The 162-residue stretch at 216–377 (GMKVVIAGRP…LRDHLKQSMG (162 aa)) folds into the TrmE-type G domain. Asn-226 contacts K(+). GTP-binding positions include 226-231 (NAGKSS), 245-251 (TDIAGTT), 270-273 (DTAG), 335-338 (NKAD), and 358-360 (SAR). Ser-230 lines the Mg(2+) pocket. K(+) contacts are provided by Thr-245, Ile-247, and Thr-250. Thr-251 serves as a coordination point for Mg(2+). Lys-454 provides a ligand contact to (6S)-5-formyl-5,6,7,8-tetrahydrofolate.

Belongs to the TRAFAC class TrmE-Era-EngA-EngB-Septin-like GTPase superfamily. TrmE GTPase family. In terms of assembly, homodimer. Heterotetramer of two MnmE and two MnmG subunits. The cofactor is K(+).

It localises to the cytoplasm. Exhibits a very high intrinsic GTPase hydrolysis rate. Involved in the addition of a carboxymethylaminomethyl (cmnm) group at the wobble position (U34) of certain tRNAs, forming tRNA-cmnm(5)s(2)U34. In Yersinia pseudotuberculosis serotype O:1b (strain IP 31758), this protein is tRNA modification GTPase MnmE.